The primary structure comprises 486 residues: Transcriptional adapter 2-beta (486 aa).

A ZZ-type zinc finger spans residues 4-59; it reads LGKKYCVNCLADVTNLRIRCAECQDIELCPECFSAGAEIGNHRRWHGYQQVDGGRF. Residues cysteine 9, cysteine 12, cysteine 23, cysteine 26, cysteine 32, cysteine 35, histidine 45, and histidine 49 each coordinate Zn(2+). An SANT domain is found at 65–118; that stretch reads EAEGGWTSREEQSLLDAIEQYGFGNWEDMAAHVGASRTPQEVMDHYVSMYIHGN. Disordered stretches follow at residues 237–291 and 343–377; these read KKDK…EKGQ and EYEA…TAGL. Gly residues-rich tracts occupy residues 247–262 and 367–377; these read GTVG…GSGS and SSGGGGGTAGL.

The protein localises to the nucleus. Transcriptional coactivator. In Danio rerio (Zebrafish), this protein is Transcriptional adapter 2-beta (tada2b).